We begin with the raw amino-acid sequence, 782 residues long: Protein phosphatase 1 regulatory subunit 12C (782 aa).

Low complexity-rich tracts occupy residues 1-19 (MSGE…AAAA) and 77-88 (DPGPGSGAASDP). 2 disordered regions span residues 1–45 (MSGE…GERR) and 77–98 (DPGP…RAVL). S2 carries the N-acetylserine modification. ANK repeat units follow at residues 104 to 133 (DGIS…TVNQ), 137 to 166 (EGWT…NIAA), 230 to 259 (TGAS…DTEL), and 263 to 292 (DGWT…GMDS). Positions 301–332 (CDLADEDVMNLLEELAQKQEDLRNQKEGSQGR) form a coiled coil. A disordered region spans residues 321–685 (DLRNQKEGSQ…HEEPDGGFRK (365 aa)). Positions 332 to 341 (RGQESQVPSS) are enriched in polar residues. The segment covering 353-369 (SSREKISLQDLSKERRP) has biased composition (basic and acidic residues). Positions 401-413 (VSSPVSSNPKSPV) are enriched in low complexity. Phosphoserine is present on residues S403, S411, S431, S454, and S509. Positions 451–465 (RSASSSLLEKASTQA) are enriched in polar residues. A compositionally biased stretch (basic and acidic residues) spans 537–546 (VRDEESESQR). Over residues 547–557 (KARSRLMRQSR) the composition is skewed to basic residues. T560 bears the Phosphothreonine mark. A Phosphoserine modification is found at S647. Residues 664-685 (SQRDLVLESKQEHEEPDGGFRK) show a composition bias toward basic and acidic residues. Residues 681-782 (GGFRKMYTEL…LIRVISKLSK (102 aa)) adopt a coiled-coil conformation.

As to quaternary structure, PP1 comprises a catalytic subunit, PPP1CA, PPP1CB or PPP1CC, and one or several targeting or regulatory subunits. PPP1R12C mediates binding to myosin. Interacts via its N-terminus with PPP1CB. Interacts with IL16. Interacts with the coiled-coil domain of MPRIP. Interacts with NOD2. In terms of processing, phosphorylation at Thr-560 is essential for its interaction with PPP1CB.

Its subcellular location is the cytoplasm. The protein resides in the cytoskeleton. It localises to the stress fiber. Regulates myosin phosphatase activity. In Mus musculus (Mouse), this protein is Protein phosphatase 1 regulatory subunit 12C.